Reading from the N-terminus, the 156-residue chain is ATP synthase subunit b (156 aa).

The helical transmembrane segment at 7-27 (LFAQMIVFFVLWWVVARFVWP) threads the bilayer.

This sequence belongs to the ATPase B chain family. In terms of assembly, F-type ATPases have 2 components, F(1) - the catalytic core - and F(0) - the membrane proton channel. F(1) has five subunits: alpha(3), beta(3), gamma(1), delta(1), epsilon(1). F(0) has three main subunits: a(1), b(2) and c(10-14). The alpha and beta chains form an alternating ring which encloses part of the gamma chain. F(1) is attached to F(0) by a central stalk formed by the gamma and epsilon chains, while a peripheral stalk is formed by the delta and b chains.

It is found in the cell membrane. F(1)F(0) ATP synthase produces ATP from ADP in the presence of a proton or sodium gradient. F-type ATPases consist of two structural domains, F(1) containing the extramembraneous catalytic core and F(0) containing the membrane proton channel, linked together by a central stalk and a peripheral stalk. During catalysis, ATP synthesis in the catalytic domain of F(1) is coupled via a rotary mechanism of the central stalk subunits to proton translocation. In terms of biological role, component of the F(0) channel, it forms part of the peripheral stalk, linking F(1) to F(0). The sequence is that of ATP synthase subunit b from Polynucleobacter asymbioticus (strain DSM 18221 / CIP 109841 / QLW-P1DMWA-1) (Polynucleobacter necessarius subsp. asymbioticus).